A 158-amino-acid chain; its full sequence is Small ribosomal subunit protein uS9 (158 aa).

This sequence belongs to the universal ribosomal protein uS9 family.

In Brucella melitensis biotype 1 (strain ATCC 23456 / CCUG 17765 / NCTC 10094 / 16M), this protein is Small ribosomal subunit protein uS9.